A 181-amino-acid polypeptide reads, in one-letter code: Peptidyl-tRNA hydrolase 2, mitochondrial (181 aa).

A helical transmembrane segment spans residues 10 to 32 (YLVHPGTLSLAAGVACGMCLGWG). Residues Lys78, Lys83, Lys97, Lys108, Lys117, and Lys179 each participate in a glycyl lysine isopeptide (Lys-Gly) (interchain with G-Cter in ubiquitin) cross-link.

This sequence belongs to the PTH2 family. In terms of assembly, monomer. In terms of processing, ubiquitinated by PRKN during mitophagy, leading to its degradation and enhancement of mitophagy. Deubiquitinated by USP30.

It localises to the mitochondrion outer membrane. It catalyses the reaction an N-acyl-L-alpha-aminoacyl-tRNA + H2O = an N-acyl-L-amino acid + a tRNA + H(+). Its function is as follows. Peptidyl-tRNA hydrolase which releases tRNAs from the ribosome during protein synthesis. Promotes caspase-independent apoptosis by regulating the function of two transcriptional regulators, AES and TLE1. This Mus musculus (Mouse) protein is Peptidyl-tRNA hydrolase 2, mitochondrial (Ptrh2).